A 585-amino-acid chain; its full sequence is Arginine--tRNA ligase (585 aa).

The short motif at 126-136 (PNIAKEMHVGH) is the 'HIGH' region element.

It belongs to the class-I aminoacyl-tRNA synthetase family. As to quaternary structure, monomer.

The protein resides in the cytoplasm. It carries out the reaction tRNA(Arg) + L-arginine + ATP = L-arginyl-tRNA(Arg) + AMP + diphosphate. This is Arginine--tRNA ligase from Picosynechococcus sp. (strain ATCC 27264 / PCC 7002 / PR-6) (Agmenellum quadruplicatum).